Here is a 334-residue protein sequence, read N- to C-terminus: Protein CapI (334 aa).

Serine 126 serves as a coordination point for substrate. Catalysis depends on tyrosine 151, which acts as the Proton acceptor.

Belongs to the NAD(P)-dependent epimerase/dehydratase family.

It functions in the pathway capsule biogenesis; capsule polysaccharide biosynthesis. Its function is as follows. Required for the biosynthesis of type 1 capsular polysaccharide. The polypeptide is Protein CapI (capI) (Staphylococcus aureus).